A 1038-amino-acid polypeptide reads, in one-letter code: MAGSHVDMAPASTTEGTGEKPGPTAPAPTPAAQYECGECGKSFRWSSRLLHHQRTHTGERPYKCPDCPKAFKGSSALLYHQRGHTGERPYQCPDCPKAFKRSSLLQIHRSVHTGLRAFTCGQCGLAFKWSSHYQYHLRQHTGERPYPCPDCPKAFKNSSSLRRHRHVHTGERPYTCGICGKSFTQSTNLRQHQRVHTGERPFRCPLCPKTFTHSSNLLLHHRTHGPAPGPAPAPAPPGETSRADTKVLVSDAYLQPRSPPEPPAPPPQPPPVVPELFLAAAETTVELVYRCDGCEQGFSSEELLLEHQPCPGPPVATQSQDVPAELPQADSALPQPPPATPGPPNFACLPCGKSFRTVAGLSRHQHSHGAASGQAFRCGSCDGAFPQLASLLAHQQCHVEEAAAGRPPPQAEVAEVTCPQEPVAPATPAPPPPPPPAPVVSAERPYKCAECGKAFKGSSGLRYHLRDHTGERPYQCGECGKAFKRSSLLAIHQRVHTGLRAFTCGQCGLTFKWSSHYQYHLRLHSGERPYACTECGKAFRNTSCLRRHRHVHTGERPHSCSVCGKSFAQTSNLRQHQRVHTGERPFRCPLCPKTFTHSSNLLLHQRTHSAERPFACPICGRGFVMAAYLQRHLRTHTPATTTSGTTGSAVASQPPAPLAAAPTPLAAQDVHVLPNLQATLSLEVAGGTAQPTPPGPAAPSSQTFLLVQTAQGLQLIPSSVQSPTPPPPPPPPKVILLPPASAGGPGSGAARPGPRSVGKAGQGTGVVWFPGPGGLGLQGGANAGASGGGQSLIVLQNVGSGETGPQEVSGVQLQPAQEVATVQLQPAQEVTTVQLQPAQEVTTVQLQPLTGQVSNSNGGAGTTEAPNLLLVQSGATEELLTGPGPGEVGDSEAGAGVVQDVLFETLQTDEGLQSVLVLSGADGEQTRLCVQEVETLSPGLAEPAATGPSGQKLLIIRSAPATDLLENSSVAGGTTTLQLLAPSAPGPVSAPVGVPVAPPSQMVQVVPAVAGPGVMAPQNLPSIQIVQTLPAVQLVHTF.

A disordered region spans residues 1 to 31 (MAGSHVDMAPASTTEGTGEKPGPTAPAPTPA). Residues 13–22 (TTEGTGEKPG) are compositionally biased toward low complexity. C2H2-type zinc fingers lie at residues 34–56 (YECGECGKSFRWSSRLLHHQRTH), 62–84 (YKCPDCPKAFKGSSALLYHQRGH), 90–112 (YQCPDCPKAFKRSSLLQIHRSVH), 118–140 (FTCGQCGLAFKWSSHYQYHLRQH), 146–168 (YPCPDCPKAFKNSSSLRRHRHVH), and 174–196 (YTCGICGKSFTQSTNLRQHQRVH). The residue at position 197 (T197) is a Phosphothreonine. The segment at 202–224 (FRCPLCPKTFTHSSNLLLHHRTH) adopts a C2H2-type 7 zinc-finger fold. Disordered stretches follow at residues 220 to 242 (HHRTHGPAPGPAPAPAPPGETSR) and 254 to 273 (LQPRSPPEPPAPPPQPPPVV). 2 stretches are compositionally biased toward pro residues: residues 227-237 (APGPAPAPAPP) and 257-273 (RSPPEPPAPPPQPPPVV). 7 C2H2-type zinc fingers span residues 346 to 368 (FACLPCGKSFRTVAGLSRHQHSH), 376 to 398 (FRCGSCDGAFPQLASLLAHQQCH), 446 to 468 (YKCAECGKAFKGSSGLRYHLRDH), 474 to 496 (YQCGECGKAFKRSSLLAIHQRVH), 502 to 524 (FTCGQCGLTFKWSSHYQYHLRLH), 530 to 552 (YACTECGKAFRNTSCLRRHRHVH), and 558 to 580 (HSCSVCGKSFAQTSNLRQHQRVH). T581 carries the post-translational modification Phosphothreonine. 2 C2H2-type zinc fingers span residues 586–608 (FRCPLCPKTFTHSSNLLLHQRTH) and 614–636 (FACPICGRGFVMAAYLQRHLRTH). Disordered regions lie at residues 637 to 661 (TPATTTSGTTGSAVASQPPAPLAAA) and 717 to 763 (PSSV…AGQG). The segment covering 723–733 (PTPPPPPPPPK) has biased composition (pro residues). Residues 734–756 (VILLPPASAGGPGSGAARPGPRS) show a composition bias toward low complexity. A run of 4 repeats spans residues 811–821 (VQLQPAQEVAT), 822–832 (VQLQPAQEVTT), 833–843 (VQLQPAQEVTT), and 844–854 (VQLQPLTGQVS). A 4 X 11 AA tandem repeats of VQLQP-[AL]-[QT]-[EG]-[VQ]-[ATV]-[ST] region spans residues 811 to 854 (VQLQPAQEVATVQLQPAQEVTTVQLQPAQEVTTVQLQPLTGQVS). The tract at residues 922-1038 (DGEQTRLCVQ…LPAVQLVHTF (117 aa)) is interaction with TAF4B.

In terms of assembly, interacts with TAF4B. As to expression, expressed widely in testis, in both germline and somatic cells. Seems to have particularly strong expression in meiotic spermatocytes, postmeiotic round spermatids and Sertoli cells. Not detected in elongating spermatids or mature sperm (at protein level). Expressed in testis, ovary, spleen, lung, brain, liver and kidney. Expressed in D3 embryonic stem cells and F9 embryonal carcinoma cells.

Its subcellular location is the nucleus. Transcriptional activator. Binds DNA on GT-box consensus sequence 5'-TTGGTT-3'. Plays a role in spermiogenesis. The polypeptide is Zinc finger protein 628 (Mus musculus (Mouse)).